Reading from the N-terminus, the 523-residue chain is F-box only protein 31-B (523 aa).

One can recognise an F-box domain in the interval 59–105 (PRSLLQLPPEILVEIFSSLPGTELPSLAQVCRKFRQILTTDTIWKRR). 4 residues coordinate Zn(2+): C201, H209, C225, and H231. Residues 372–427 (IQREQRQTGNEEDDGKGAGPDRAEHSQQPAPVHRPAKEDVNGVDNADDREQKPPNV) form a disordered region. 2 stretches are compositionally biased toward basic and acidic residues: residues 386 to 396 (GKGAGPDRAEH) and 406 to 423 (PAKEDVNGVDNADDREQK).

The protein belongs to the FBXO31 family. As to quaternary structure, part of a SCF (SKP1-cullin-F-box) protein ligase complex SCF(FBXO31).

It is found in the cytoplasm. It functions in the pathway protein modification; protein ubiquitination. Functionally, substrate-recognition component of the SCF(FBXO31) protein ligase complex, which specifically mediates the ubiquitination of proteins amidated at their C-terminus in response to oxidative stress, leading to their degradation by the proteasome. Fbxo31 specifically recognizes and binds C-terminal peptides bearing an amide: C-terminal amidation in response to oxidative stress takes place following protein fragmentation. The SCF(FBXO31) also plays a role in G1 arrest following DNA damage by mediating ubiquitination of phosphorylated cyclin-D1 (ccnd1), promoting its degradation by the proteasome, resulting in G1 arrest. The SCF(FBXO31) complex is however not a major regulator of ccnd1 stability during the G1/S transition. This Xenopus laevis (African clawed frog) protein is F-box only protein 31-B (fbxo31-b).